The following is a 338-amino-acid chain: Limbic system-associated membrane protein (338 aa).

A signal peptide spans 1–28; the sequence is MVGRVQPDRKQLPLVLLRLLCLLPTGLP. Ig-like C2-type domains follow at residues 29–122, 132–214, and 219–304; these read VRSV…PKTS, PKIS…VKVT, and PTIT…ASLV. N40 and N66 each carry an N-linked (GlcNAc...) asparagine glycan. A disulfide bridge links C53 with C111. At Y94 the chain carries Phosphotyrosine. N-linked (GlcNAc...) asparagine glycosylation is found at N136 and N148. 2 cysteine pairs are disulfide-bonded: C153–C197 and C239–C290. Residues N279, N287, and N300 are each glycosylated (N-linked (GlcNAc...) asparagine). The GPI-anchor amidated asparagine; alternate moiety is linked to residue N315. N-linked (GlcNAc...) asparagine; alternate glycosylation is present at N315. The propeptide at 316–338 is removed in mature form; that stretch reads GSISLAVPLWLLAASLFCLLSKC.

It belongs to the immunoglobulin superfamily. IgLON family. As to expression, expressed mostly by neurons comprising limbic-associated cortical and subcortical regions that function in cognition, emotion, memory, and learning.

The protein resides in the cell membrane. Mediates selective neuronal growth and axon targeting. Contributes to the guidance of developing axons and remodeling of mature circuits in the limbic system. Essential for normal growth of the hippocampal mossy fiber projection. The polypeptide is Limbic system-associated membrane protein (Lsamp) (Rattus norvegicus (Rat)).